Reading from the N-terminus, the 537-residue chain is Di/tripeptide-binding protein 1 (537 aa).

The N-terminal stretch at 1 to 29 (MRRNAVIRSAIMPSLLGAALVAAVPQAFA) is a signal peptide.

It belongs to the bacterial solute-binding protein 5 family. The complex is composed of two ATP-binding proteins (DppD and DppF), two transmembrane proteins (DppB and DppC) and a solute-binding protein (DppA1). Five orthologous SBPs (DppA1-A5) are present in P.aeruginosa, which increases the substrate specificity of the DppBCDF transporter.

Its function is as follows. Part of the ABC transporter DppABCDF involved in the uptake of various di/tripeptides. Prefers dipeptides with acidic residues at the C-terminal end. Involved in the uptake of phaseolotoxin, a toxic tripeptide inhibiting the enzyme ornithine carbamoyltransferase. This is Di/tripeptide-binding protein 1 from Pseudomonas aeruginosa (strain UCBPP-PA14).